Reading from the N-terminus, the 203-residue chain is MINILHVIAGLALASVGVDARQVGVGADVLHAVENTIDSITGVEASHSALEVGGGITNTDNWETFAGLPLTGAIKVNDGNSVVHISAYFPEDRRGKYSYYAATSDELQKTVVFLFVVEDDGLLLQAVKNNAHYPVTNGMYLASHRYYPKDSKYEGMVRLMVHADPAKAVIWEFVTVGGKQYLKVKENRDYTALQIPRHHPRPG.

Residues 1 to 20 (MINILHVIAGLALASVGVDA) form the signal peptide. Residues 21-53 (RQVGVGADVLHAVENTIDSITGVEASHSALEVG) constitute a propeptide that is removed on maturation.

As to quaternary structure, monomer.

N-acetyl-D-glucosamine-specific lectin. Specifically agglutinates rabbit erythrocytes. The protein is Lectin (UPL1) of Ulva pertusa (Sea lettuce).